Here is a 237-residue protein sequence, read N- to C-terminus: Ribosomal RNA small subunit methyltransferase G (237 aa).

S-adenosyl-L-methionine contacts are provided by residues Gly78, Phe83, 129–130, and Arg148; that span reads AE. The tract at residues 218-237 is disordered; it reads KKETPNKYPRKAGMPNKRPL.

It belongs to the methyltransferase superfamily. RNA methyltransferase RsmG family.

It localises to the cytoplasm. In terms of biological role, specifically methylates the N7 position of a guanine in 16S rRNA. The protein is Ribosomal RNA small subunit methyltransferase G of Streptococcus pneumoniae (strain JJA).